The sequence spans 141 residues: Hemoglobin subunit alpha-D (141 aa).

A Globin domain is found at 1-141 (MLTEDDKQLI…VSAVLAEKYR (141 aa)). Residues H58 and H87 each coordinate heme b.

This sequence belongs to the globin family. In terms of assembly, heterotetramer of two alpha-D chains and two beta chains. In terms of tissue distribution, red blood cells.

Involved in oxygen transport from the lung to the various peripheral tissues. The polypeptide is Hemoglobin subunit alpha-D (HBAD) (Chelonoidis niger (Galapagos giant tortoise)).